The chain runs to 204 residues: uncharacterized protein (204 aa).

Residues 63–83 (SLLLSMVASVTAAGGNAAIVG) form a helical membrane-spanning segment.

Its subcellular location is the membrane. This is an uncharacterized protein from Mycobacterium tuberculosis (strain ATCC 25618 / H37Rv).